A 1189-amino-acid polypeptide reads, in one-letter code: Lysine-specific demethylase hairless (1189 aa).

5 disordered regions span residues 1–40 (MEST…HHGP), 236–257 (HLQR…EMGA), 349–377 (EGGA…SHHT), 414–480 (AGSP…LQDP), and 505–552 (GEGG…RLST). Over residues 239-254 (RAGEAERPSLHQRDGE) the composition is skewed to basic and acidic residues. Over residues 457 to 469 (KDVDSGQHDEQKG) the composition is skewed to basic and acidic residues. The LXXLL motif 1 motif lies at 566–570 (LCRLL). The C6-type zinc finger occupies 600–625 (CSRCHHGLFNTHWRCPRCSHRLCVAC). The interval 702 to 750 (GDAGQQKESTQKTPPTPQPSCNGDTHRTKSIKEETPDSAETPAEDRAGR) is disordered. Positions 725–736 (DTHRTKSIKEET) are enriched in basic and acidic residues. The LXXLL motif 2 signature appears at 758–762 (LCELL). The JmjC domain occupies 946–1157 (DTSRVENLAA…LSAQLCHQGP (212 aa)). 3 residues coordinate Fe cation: C1007, E1009, and H1125.

It depends on Fe(2+) as a cofactor. In terms of tissue distribution, strongest expression of isoforms 1 and 2 is seen in the small intestine, weaker expression in brain and colon, and trace expression is found in liver, pancreas, spleen, thymus, stomach, salivary gland, appendix and trachea. Isoform 1 is always the most abundant. Isoform 1 is exclusively expressed at low levels in kidney and testis. Isoform 2 is exclusively expressed at high levels in the skin.

It localises to the nucleus. It carries out the reaction N(6),N(6)-dimethyl-L-lysyl(9)-[histone H3] + 2 2-oxoglutarate + 2 O2 = L-lysyl(9)-[histone H3] + 2 formaldehyde + 2 succinate + 2 CO2. Its function is as follows. Histone demethylase that specifically demethylates both mono- and dimethylated 'Lys-9' of histone H3. May act as a transcription regulator controlling hair biology (via targeting of collagens), neural activity, and cell cycle. The protein is Lysine-specific demethylase hairless (HR) of Homo sapiens (Human).